The sequence spans 99 residues: uncharacterized protein (99 aa).

It is found in the mitochondrion. This is an uncharacterized protein from Marchantia polymorpha (Common liverwort).